The chain runs to 425 residues: Probable threonylcarbamoyladenosine tRNA methylthiotransferase (425 aa).

Positions 2-110 constitute an MTTase N-terminal domain; the sequence is VKVYIENYGC…IVQAVEYAMR (109 aa). 6 residues coordinate [4Fe-4S] cluster: Cys-11, Cys-47, Cys-76, Cys-148, Cys-152, and Cys-155. The region spanning 134–363 is the Radical SAM core domain; the sequence is SPRNVYFILP…HRIRLQISYE (230 aa). The region spanning 366-425 is the TRAM domain; the sequence is RKYIGKKVKVLIHGEGKKGNVDAVTMNYKHIILPEGRKGEFREARVKNAASTYLLGEIIT.

The protein belongs to the methylthiotransferase family. CDKAL1 subfamily. [4Fe-4S] cluster serves as cofactor.

It catalyses the reaction N(6)-L-threonylcarbamoyladenosine(37) in tRNA + (sulfur carrier)-SH + AH2 + 2 S-adenosyl-L-methionine = 2-methylsulfanyl-N(6)-L-threonylcarbamoyladenosine(37) in tRNA + (sulfur carrier)-H + 5'-deoxyadenosine + L-methionine + A + S-adenosyl-L-homocysteine + 2 H(+). Its function is as follows. Catalyzes the methylthiolation of N6-threonylcarbamoyladenosine (t(6)A), leading to the formation of 2-methylthio-N6-threonylcarbamoyladenosine (ms(2)t(6)A) at position 37 in tRNAs that read codons beginning with adenine. This chain is Probable threonylcarbamoyladenosine tRNA methylthiotransferase, found in Pyrococcus horikoshii (strain ATCC 700860 / DSM 12428 / JCM 9974 / NBRC 100139 / OT-3).